Here is a 488-residue protein sequence, read N- to C-terminus: MIPVVALVGRPNVGKSTLFNRLTRTRDALVADFPGLTRDRKYGRAFLSGYEFIVVDTGGIDGTEEGIETKMAEQSLAAIEEADVVLFMTDARAGLTAADLSIAQHLRSRQKTTFVVANKIDGIDADSACAEFWSLGLGEVYQMAAAQGRGVTNMIEYALTPYAEAMGIERQGEEEEVDERQYTEEEAEAEQKRLQDLPIKLAIIGKPNVGKSTLTNRILGEERVVVYDEPGTTRDSIYIPMERDGREYVIIDTAGVRRRSKVHEVIEKFSVIKTLKAVEDANVVLLIIDAREGVAEQDLGLLGFALNAGRALVIAVNKWDGIDQGIKDRVKSELDRRLGFIDFARIHFISALHGTGVGHLFESIEEAYDSATRRVSTSMLTRIMQMSQDDHQPPLVNGRRVKLKYAHAGGYNPPIVVIHGNQVSKLPDSYKRYMMNYFRRSLKVVGTPIQLRFQEGDNPFENKVEKLTMSQERRRKRALSHIKDRKTK.

EngA-type G domains are found at residues 3–166 and 199–372; these read PVVA…AEAM and IKLA…DSAT. Residues 9 to 16, 56 to 60, 118 to 121, 205 to 212, 252 to 256, and 317 to 320 contribute to the GTP site; these read GRPNVGKS, DTGGI, NKID, GKPNVGKS, DTAGV, and NKWD. In terms of domain architecture, KH-like spans 373 to 457; sequence RRVSTSMLTR…PIQLRFQEGD (85 aa).

It belongs to the TRAFAC class TrmE-Era-EngA-EngB-Septin-like GTPase superfamily. EngA (Der) GTPase family. Associates with the 50S ribosomal subunit.

GTPase that plays an essential role in the late steps of ribosome biogenesis. The chain is GTPase Der from Shewanella sp. (strain MR-7).